The primary structure comprises 247 residues: Uridylate kinase (247 aa).

17–20 is a binding site for ATP; it reads KFSG. Glycine 59 is a UMP binding site. Positions 60 and 64 each coordinate ATP. Residues aspartate 79 and 140–147 contribute to the UMP site; that span reads TGNPFFTT. Residues threonine 167, tyrosine 173, and aspartate 176 each contribute to the ATP site.

This sequence belongs to the UMP kinase family. In terms of assembly, homohexamer.

It localises to the cytoplasm. The catalysed reaction is UMP + ATP = UDP + ADP. It participates in pyrimidine metabolism; CTP biosynthesis via de novo pathway; UDP from UMP (UMPK route): step 1/1. Its activity is regulated as follows. Inhibited by UTP. In terms of biological role, catalyzes the reversible phosphorylation of UMP to UDP. This chain is Uridylate kinase, found in Legionella pneumophila (strain Paris).